Consider the following 322-residue polypeptide: Ribose 1,5-bisphosphate isomerase (322 aa).

Residues 20–23 (RGAG) and arginine 63 each bind substrate. Cysteine 133 acts as the Proton acceptor in catalysis. 135-137 (SKA) provides a ligand contact to substrate. Residue aspartate 202 is the Proton donor of the active site. Residues 212–213 (NK) and lysine 238 contribute to the substrate site.

This sequence belongs to the eIF-2B alpha/beta/delta subunits family. R15P isomerase subfamily. As to quaternary structure, homohexamer; trimer of dimers.

It catalyses the reaction alpha-D-ribose 1,5-bisphosphate = D-ribulose 1,5-bisphosphate. With respect to regulation, is highly activated in the presence of AMP, with an increase of &gt;40-fold in activity levels. Among other nucleotides, isomerase activity is slightly increased in the presence of GMP, but CMP, UMP, TMP, and NAD(+) have no effect; therefore, AMP is likely the major activator of R15P isomerase in vivo. To a lesser extent, various compounds with an adenosyl moiety, such as dAMP, adenosine, or methylthioadenosine, can also act as activators. The regulation of this enzyme by AMP prevents excess degradation of intracellular AMP by the archaeal AMP degradation pathway. Catalyzes the isomerization of ribose 1,5-bisphosphate (R15P) to ribulose 1,5-bisphosphate (RuBP), the CO(2) acceptor and substrate for RubisCO. Only accepts the alpha-anomer of D-ribose 1,5-bisphosphate as substrate, being inactive on the beta-anomer. Displays a strict substrate specificity, since other phosphorylated sugars such as R5P, ribose, G16P, G6P, G1P, FBP, F6P, and PRPP, are not substrates. Functions in an archaeal AMP degradation pathway, together with AMP phosphorylase and RubisCO. This chain is Ribose 1,5-bisphosphate isomerase, found in Thermococcus kodakarensis (strain ATCC BAA-918 / JCM 12380 / KOD1) (Pyrococcus kodakaraensis (strain KOD1)).